The primary structure comprises 149 residues: Calmodulin-1 (149 aa).

EF-hand domains are found at residues 8-43 (EQISEFKEAFSLFDKDGDGCITTKELGTVMRSLGQN), 44-79 (PTEAELQDMINEVDADGNGTIDFPEFLNLMAKKMKD), 81-116 (DSEEELKEAFRVFDKDQNGFISAAELRHVMTNLGEK), and 117-149 (LTDEEVEEMIREADVDGDGQINYEEFVKIMMAK). 19 residues coordinate Ca(2+): D21, D23, D25, C27, E32, D57, D59, N61, T63, E68, D94, D96, N98, E105, D130, D132, D134, Q136, and E141.

Belongs to the calmodulin family. As to quaternary structure, interacts with ZAR1 (via CaMBD domain). Binds to IQD1. Binds to MEE62 in a calcium-dependent manner.

It is found in the cytoplasm. The protein localises to the cell membrane. Calmodulin mediates the control of a large number of enzymes, ion channels and other proteins by Ca(2+). Among the enzymes to be stimulated by the calmodulin-Ca(2+) complex are a number of protein kinases and phosphatases. This Arabidopsis thaliana (Mouse-ear cress) protein is Calmodulin-1 (CAM1).